A 207-amino-acid chain; its full sequence is Large ribosomal subunit protein bL25 (207 aa).

Residues 185-207 (DLEEETGEAAAEAEAPAEEGAES) form a disordered region.

It belongs to the bacterial ribosomal protein bL25 family. CTC subfamily. In terms of assembly, part of the 50S ribosomal subunit; part of the 5S rRNA/L5/L18/L25 subcomplex. Contacts the 5S rRNA. Binds to the 5S rRNA independently of L5 and L18.

This is one of the proteins that binds to the 5S RNA in the ribosome where it forms part of the central protuberance. This Rhodococcus jostii (strain RHA1) protein is Large ribosomal subunit protein bL25.